We begin with the raw amino-acid sequence, 474 residues long: GTPase Der (474 aa).

2 EngA-type G domains span residues Leu3–Arg167 and Ile204–Asn379. Residues Gly9–Ser16, Asp56–Leu60, Asn119–Glu122, Gly210–Ser217, Asp257–Leu261, and Asn322–Asp325 each bind GTP. The KH-like domain maps to Arg380 to Asp464.

It belongs to the TRAFAC class TrmE-Era-EngA-EngB-Septin-like GTPase superfamily. EngA (Der) GTPase family. In terms of assembly, associates with the 50S ribosomal subunit.

Functionally, GTPase that plays an essential role in the late steps of ribosome biogenesis. The polypeptide is GTPase Der (Bartonella tribocorum (strain CIP 105476 / IBS 506)).